The following is a 422-amino-acid chain: MAAAAVVEFQRAQSLLSTDREASIDILHSIVKRDIQENDEEAVQVKEQSILELGSLLAKTGQAAELGGLLKYVRPFLNSISKAKAARLVRSLLDLFLDMEAATGQEVELCLECIEWAKSEKRTFLRQALEARLVSLYFDTKRYQEALHLGSQLLRELKKMDDKALLVEVQLLESKTYHALSNLPKARAALTSARTTANAIYCPPKLQATLDMQSGIIHAAEEKDWKTAYSYFYEAFEGYDSIDSPKAITSLKYMLLCKIMLNTPEDVQALVSGKLALRYAGRQTEALKCVAQASKNRSLADFEKALTDYRAELRDDPIISTHLAKLYDNLLEQNLIRVIEPFSRVQIEHISSLIKLSKADVERKLSQMILDKKFHGILDQGEGVLIIFDEPPVDKTYEAALETIQNMSKVVDSLYSKAKKLT.

An N-acetylalanine modification is found at Ala-2. Ser-14 and Ser-23 each carry phosphoserine. Residues 224-392 (DWKTAYSYFY…GVLIIFDEPP (169 aa)) form the PCI domain. Lys-274 is covalently cross-linked (Glycyl lysine isopeptide (Lys-Gly) (interchain with G-Cter in SUMO2)).

Belongs to the proteasome subunit S9 family. As to quaternary structure, component of the 19S proteasome regulatory particle complex. The 26S proteasome consists of a 20S core particle (CP) and two 19S regulatory subunits (RP). The regulatory particle is made of a lid composed of 9 subunits including PSMD11, a base containing 6 ATPases and few additional components.

Functionally, component of the 26S proteasome, a multiprotein complex involved in the ATP-dependent degradation of ubiquitinated proteins. This complex plays a key role in the maintenance of protein homeostasis by removing misfolded or damaged proteins, which could impair cellular functions, and by removing proteins whose functions are no longer required. Therefore, the proteasome participates in numerous cellular processes, including cell cycle progression, apoptosis, or DNA damage repair. In the complex, PSMD11 is required for proteasome assembly. Plays a key role in increased proteasome activity in embryonic stem cells (ESCs): its high expression in ESCs promotes enhanced assembly of the 26S proteasome, followed by higher proteasome activity. The chain is 26S proteasome non-ATPase regulatory subunit 11 (Psmd11) from Mus musculus (Mouse).